The following is a 145-amino-acid chain: uncharacterized protein (145 aa).

The signal sequence occupies residues 1-22; that stretch reads MLTRLVLSAHLSSTTSPPWTHA. N-linked (GlcNAc...) asparagine glycosylation occurs at N98. Positions 103–145 are disordered; that stretch reads SSGQQRQAARQEEENSICKAHDSREGRLGYPLSAHQPGSGGPN.

The protein localises to the secreted. This is an uncharacterized protein from Homo sapiens (Human).